Consider the following 113-residue polypeptide: CRISPR-associated endoribonuclease Cas2 (113 aa).

Asp-33 provides a ligand contact to Mg(2+).

The protein belongs to the CRISPR-associated endoribonuclease Cas2 protein family. As to quaternary structure, homodimer, forms a heterotetramer with a Cas1 homodimer. The cofactor is Mg(2+).

CRISPR (clustered regularly interspaced short palindromic repeat), is an adaptive immune system that provides protection against mobile genetic elements (viruses, transposable elements and conjugative plasmids). CRISPR clusters contain sequences complementary to antecedent mobile elements and target invading nucleic acids. CRISPR clusters are transcribed and processed into CRISPR RNA (crRNA). Functions as a ssRNA-specific endoribonuclease. Involved in the integration of spacer DNA into the CRISPR cassette. The type III-A Csm effector complex binds crRNA and acts as a crRNA-guided RNase, DNase and cyclic oligoadenylate synthase; binding of target RNA cognate to the crRNA is required for all activities. The sequence is that of CRISPR-associated endoribonuclease Cas2 from Mycobacterium tuberculosis (strain CDC 1551 / Oshkosh).